A 448-amino-acid polypeptide reads, in one-letter code: tRNA(Ile)-lysidine synthase (448 aa).

ATP is bound at residue Ser-28–Ser-33.

This sequence belongs to the tRNA(Ile)-lysidine synthase family.

It localises to the cytoplasm. It catalyses the reaction cytidine(34) in tRNA(Ile2) + L-lysine + ATP = lysidine(34) in tRNA(Ile2) + AMP + diphosphate + H(+). Its function is as follows. Ligates lysine onto the cytidine present at position 34 of the AUA codon-specific tRNA(Ile) that contains the anticodon CAU, in an ATP-dependent manner. Cytidine is converted to lysidine, thus changing the amino acid specificity of the tRNA from methionine to isoleucine. The polypeptide is tRNA(Ile)-lysidine synthase (Lactiplantibacillus plantarum (strain ATCC BAA-793 / NCIMB 8826 / WCFS1) (Lactobacillus plantarum)).